The chain runs to 394 residues: C-19 steroid 1alpha-hydroxylase (394 aa).

Positions 81, 85, 281, 335, 338, and 340 each coordinate heme b.

Belongs to the cytochrome P450 family. The cofactor is heme b.

It carries out the reaction testosterone + 2 reduced [2Fe-2S]-[ferredoxin] + O2 + 2 H(+) = 1alpha-hydroxytestosterone + 2 oxidized [2Fe-2S]-[ferredoxin] + H2O. It catalyses the reaction androst-4-ene-3,17-dione + 2 reduced [2Fe-2S]-[ferredoxin] + O2 + 2 H(+) = 1alpha-hydroxyandrost-4-ene-3,17-dione + 2 oxidized [2Fe-2S]-[ferredoxin] + H2O. In terms of biological role, hydroxylase that can catalyze the in vitro conversion of the sesquiterpenoid nootkatone, a natural organic compound produced by some plants, to at least five hydrophilic products. The native ferredoxin reductase FdR_B and either Fdx2 or Fdx8 ferredoxins can act as the redox partners for the conversion of nootkatone. Functionally, in addition, acts as a steroid 1alpha-hydroxylase, when associated in vitro with the surrogate redox partners bovine adrenodoxin (Adx) and adrenodoxin reductase (Adr). Acts on several C-19 steroid substrates, including testosterone and androstenedione, which are hydroxylated to 1alpha-hydroxytestosterone and 1alpha-hydroxyandrostenedione, respectively. Can use their derivatives testosterone-acetate and 11-oxoandrostenedione, but not vitamin D3 and 25-hydroxyvitamin D3. Also catalyzes the hydroxylation of the C-21 steroid 11-deoxycorticosterone to 1alpha-hydroxy-11-deoxycorticosterone. Catalyzes the hydroxylation of the C-21 steroid progesterone, leading to the formation of seven products: two major (1alpha-hydroxyprogesterone and 17alpha-hydroxyprogesterone) and five minor products. The protein is C-19 steroid 1alpha-hydroxylase of Sorangium cellulosum (strain So ce56) (Polyangium cellulosum (strain So ce56)).